A 285-amino-acid chain; its full sequence is 4-diphosphocytidyl-2-C-methyl-D-erythritol kinase (285 aa).

Residue Lys28 is part of the active site. 109–119 (PVAAGLGGGSA) serves as a coordination point for ATP. Asp148 is a catalytic residue.

The protein belongs to the GHMP kinase family. IspE subfamily.

The catalysed reaction is 4-CDP-2-C-methyl-D-erythritol + ATP = 4-CDP-2-C-methyl-D-erythritol 2-phosphate + ADP + H(+). It participates in isoprenoid biosynthesis; isopentenyl diphosphate biosynthesis via DXP pathway; isopentenyl diphosphate from 1-deoxy-D-xylulose 5-phosphate: step 3/6. Catalyzes the phosphorylation of the position 2 hydroxy group of 4-diphosphocytidyl-2C-methyl-D-erythritol. This chain is 4-diphosphocytidyl-2-C-methyl-D-erythritol kinase, found in Novosphingobium aromaticivorans (strain ATCC 700278 / DSM 12444 / CCUG 56034 / CIP 105152 / NBRC 16084 / F199).